The sequence spans 159 residues: NADH-quinone oxidoreductase subunit I (159 aa).

4Fe-4S ferredoxin-type domains follow at residues 51 to 80 and 90 to 119; these read RRYENGEERCIACKLCEAICPAQAIVIEAD and TRYDIDMTKCIYCGLCQAACPVDAIVEGPN. [4Fe-4S] cluster-binding residues include cysteine 60, cysteine 63, cysteine 66, cysteine 70, cysteine 99, cysteine 102, cysteine 105, and cysteine 109.

The protein belongs to the complex I 23 kDa subunit family. As to quaternary structure, NDH-1 is composed of 14 different subunits. Subunits NuoA, H, J, K, L, M, N constitute the membrane sector of the complex. It depends on [4Fe-4S] cluster as a cofactor.

The protein resides in the cell inner membrane. The enzyme catalyses a quinone + NADH + 5 H(+)(in) = a quinol + NAD(+) + 4 H(+)(out). Its function is as follows. NDH-1 shuttles electrons from NADH, via FMN and iron-sulfur (Fe-S) centers, to quinones in the respiratory chain. The immediate electron acceptor for the enzyme in this species is believed to be ubiquinone. Couples the redox reaction to proton translocation (for every two electrons transferred, four hydrogen ions are translocated across the cytoplasmic membrane), and thus conserves the redox energy in a proton gradient. This Rickettsia massiliae (strain Mtu5) protein is NADH-quinone oxidoreductase subunit I.